We begin with the raw amino-acid sequence, 218 residues long: Imidazole glycerol phosphate synthase subunit HisH (218 aa).

Positions 5 to 213 constitute a Glutamine amidotransferase type-1 domain; that stretch reads RLAVIDYEAG…VEFVARCSPL (209 aa). Catalysis depends on cysteine 83, which acts as the Nucleophile. Active-site residues include histidine 188 and glutamate 190.

In terms of assembly, heterodimer of HisH and HisF.

It localises to the cytoplasm. It carries out the reaction 5-[(5-phospho-1-deoxy-D-ribulos-1-ylimino)methylamino]-1-(5-phospho-beta-D-ribosyl)imidazole-4-carboxamide + L-glutamine = D-erythro-1-(imidazol-4-yl)glycerol 3-phosphate + 5-amino-1-(5-phospho-beta-D-ribosyl)imidazole-4-carboxamide + L-glutamate + H(+). It catalyses the reaction L-glutamine + H2O = L-glutamate + NH4(+). Its pathway is amino-acid biosynthesis; L-histidine biosynthesis; L-histidine from 5-phospho-alpha-D-ribose 1-diphosphate: step 5/9. IGPS catalyzes the conversion of PRFAR and glutamine to IGP, AICAR and glutamate. The HisH subunit catalyzes the hydrolysis of glutamine to glutamate and ammonia as part of the synthesis of IGP and AICAR. The resulting ammonia molecule is channeled to the active site of HisF. The sequence is that of Imidazole glycerol phosphate synthase subunit HisH from Synechococcus sp. (strain JA-2-3B'a(2-13)) (Cyanobacteria bacterium Yellowstone B-Prime).